Reading from the N-terminus, the 769-residue chain is Homoaconitase, mitochondrial (769 aa).

The transit peptide at 1-28 directs the protein to the mitochondrion; that stretch reads MQSRLLPSGPGRRWISLRVPNTPQRRAF. Cys391, Cys460, and Cys463 together coordinate [4Fe-4S] cluster.

It belongs to the aconitase/IPM isomerase family. Requires [4Fe-4S] cluster as cofactor.

Its subcellular location is the mitochondrion. It carries out the reaction (2R,3S)-homoisocitrate = cis-homoaconitate + H2O. It functions in the pathway amino-acid biosynthesis; L-lysine biosynthesis via AAA pathway; L-alpha-aminoadipate from 2-oxoglutarate: step 3/5. Functionally, catalyzes the reversible hydration of cis-homoaconitate to (2R,3S)-homoisocitrate, a step in the alpha-aminoadipate pathway for lysine biosynthesis. The polypeptide is Homoaconitase, mitochondrial (lysA) (Aspergillus niger (strain ATCC MYA-4892 / CBS 513.88 / FGSC A1513)).